The chain runs to 256 residues: Transcription factor bHLH131 (256 aa).

The bHLH domain maps to 91–140 (VAAKKHSDAERRRRLRINSQFATLRTILPNLVKQDKASVLGETVRYFNEL).

In terms of assembly, homodimer.

It localises to the nucleus. The sequence is that of Transcription factor bHLH131 (BHLH131) from Arabidopsis thaliana (Mouse-ear cress).